Consider the following 447-residue polypeptide: MEMHPWLPNLKYTEEMLKEIGVNDIMNLFSDVPQDLILKRKLNIPYDKPLSEYEISQRLNELKKKNLELKYPPFIGGGLCPHYIPEAVKFIMSRSEFYTAYTPYQPEISQGLLQAIYEYQSLMAELLEMEFVNASMYDWASAIAEAVLMAHRINRRKSVLLPSNMNPYHREVVKTWVYGKGIRITELPTDSTSGQIDIEKLEQINTDDVSAIYIQQPNFYGIFEENIEYIVDFAKKKNIITIMGVSPLSLGLIKPPGEYGIDIAVGDGQEIGLPLNYGGPLMGIFAVRWDSQLVRQMPGRIVGLTKDEKGNRAFTLILQTREQFTRREKATSNITTNETLMAIGSAVYLSLLGKHGLRDLAEEIYVRSHYAKKKFEELGFKSPYSGEFFEEFVIQFPKNYNLIHSSLLNKRIHGGLQLNDYCALFCFTEVHTRVMIDELVKSIAEVL.

This sequence belongs to the GcvP family. N-terminal subunit subfamily. As to quaternary structure, the glycine cleavage system is composed of four proteins: P, T, L and H. In this organism, the P 'protein' is a heterodimer of two subunits.

The catalysed reaction is N(6)-[(R)-lipoyl]-L-lysyl-[glycine-cleavage complex H protein] + glycine + H(+) = N(6)-[(R)-S(8)-aminomethyldihydrolipoyl]-L-lysyl-[glycine-cleavage complex H protein] + CO2. The glycine cleavage system catalyzes the degradation of glycine. The P protein binds the alpha-amino group of glycine through its pyridoxal phosphate cofactor; CO(2) is released and the remaining methylamine moiety is then transferred to the lipoamide cofactor of the H protein. This is Probable glycine dehydrogenase (decarboxylating) subunit 1 from Sulfolobus acidocaldarius (strain ATCC 33909 / DSM 639 / JCM 8929 / NBRC 15157 / NCIMB 11770).